Consider the following 338-residue polypeptide: Tryptophan--tRNA ligase (338 aa).

ATP-binding positions include 11–13 (QPS) and 19–20 (GN). A 'HIGH' region motif is present at residues 12-20 (PSGELSIGN). D135 contributes to the L-tryptophan binding site. Residues 147–149 (GSD), V189, and 198–202 (KMSKS) each bind ATP. Positions 198–202 (KMSKS) match the 'KMSKS' region motif.

Belongs to the class-I aminoacyl-tRNA synthetase family. As to quaternary structure, homodimer.

Its subcellular location is the cytoplasm. The catalysed reaction is tRNA(Trp) + L-tryptophan + ATP = L-tryptophyl-tRNA(Trp) + AMP + diphosphate + H(+). Functionally, catalyzes the attachment of tryptophan to tRNA(Trp). This Vibrio cholerae serotype O1 (strain ATCC 39315 / El Tor Inaba N16961) protein is Tryptophan--tRNA ligase.